A 231-amino-acid chain; its full sequence is Dephospho-CoA kinase domain-containing protein (231 aa).

The 205-residue stretch at 3–207 (LVGLTGGIAS…RSLEYLPLRF (205 aa)) folds into the DPCK domain. Position 8–15 (8–15 (GGIASGKS)) interacts with ATP.

It belongs to the CoaE family.

The chain is Dephospho-CoA kinase domain-containing protein (DCAKD) from Homo sapiens (Human).